The sequence spans 249 residues: Tetrahydromethanopterin S-methyltransferase subunit D (249 aa).

Helical transmembrane passes span 9-29 (ILWLVFIIIGGVLISWSVHFV), 47-67 (GTVQLAAGAGLTGLVSAGFMM), 75-95 (LILASGAVGAMIMISVTMIVG), 138-158 (VSFVSGVIGGLLGGIGGALVY), 183-203 (LVGIAAMFAIGIFFVNAVIPS), and 224-244 (AVISSFVATILCAIVAVIAIS).

It belongs to the MtrD family. In terms of assembly, the complex is composed of 8 subunits; MtrA, MtrB, MtrC, MtrD, MtrE, MtrF, MtrG and MtrH.

Its subcellular location is the cell membrane. It carries out the reaction 5-methyl-5,6,7,8-tetrahydromethanopterin + coenzyme M + 2 Na(+)(in) = 5,6,7,8-tetrahydromethanopterin + methyl-coenzyme M + 2 Na(+)(out). It functions in the pathway one-carbon metabolism; methanogenesis from CO(2); methyl-coenzyme M from 5,10-methylene-5,6,7,8-tetrahydromethanopterin: step 2/2. Its function is as follows. Part of a complex that catalyzes the formation of methyl-coenzyme M and tetrahydromethanopterin from coenzyme M and methyl-tetrahydromethanopterin. This is an energy-conserving, sodium-ion translocating step. The polypeptide is Tetrahydromethanopterin S-methyltransferase subunit D (Methanosarcina acetivorans (strain ATCC 35395 / DSM 2834 / JCM 12185 / C2A)).